A 134-amino-acid polypeptide reads, in one-letter code: Small ribosomal subunit protein uS9 (134 aa).

The interval 114 to 134 (EVERKKYGLKKARRAPQFSKR) is disordered. The segment covering 120-134 (YGLKKARRAPQFSKR) has biased composition (basic residues).

It belongs to the universal ribosomal protein uS9 family.

The polypeptide is Small ribosomal subunit protein uS9 (Thermotoga sp. (strain RQ2)).